The sequence spans 232 residues: DQGAGVTYLEPSASQIGHKESIKDTARVLGRMYDGIEYRGFGQEVVEELAKYAGVPVFNGLTNEFHPTQMLADALTMREHSGKPLNQTAFAYVGDARYNMANSLLVLGAKLGMDVRIGAPKTLWPSENIVARARAVAEETGGKILLTENAEEAVKGVDFIHTDVWVSMGEPKEAWQERIDLLKDYRVTPELMEASGNPQVKFMHCLPAFHNRETKVGEWIYETFGLNGVEVT.

Carbamoyl phosphate is bound by residues glutamine 15, arginine 39, and 66–69 (HPTQ). Residues asparagine 99, aspartate 163, and 167-168 (SM) each bind L-ornithine. Residues 204–207 (HCLP) and threonine 232 each bind carbamoyl phosphate.

This sequence belongs to the aspartate/ornithine carbamoyltransferase superfamily. OTCase family.

The protein resides in the cytoplasm. The enzyme catalyses carbamoyl phosphate + L-ornithine = L-citrulline + phosphate + H(+). Its pathway is amino-acid biosynthesis; L-arginine biosynthesis; L-arginine from L-ornithine and carbamoyl phosphate: step 1/3. Its function is as follows. Reversibly catalyzes the transfer of the carbamoyl group from carbamoyl phosphate (CP) to the N(epsilon) atom of ornithine (ORN) to produce L-citrulline. This Neisseria sicca protein is Ornithine carbamoyltransferase (argF).